The following is a 98-amino-acid chain: Feather keratin 1 (98 aa).

Belongs to the avian keratin family. The avian keratins (F-ker, S-ker, C-ker and B-ker) are a complex mixture of very similar polypeptides.

This chain is Feather keratin 1, found in Gallus gallus (Chicken).